A 477-amino-acid chain; its full sequence is MQVTETLNEGLKREIKVVVPAGDLEAKLAERLETARGRARINGFRPGKVPTAHLRKMYGKSFMAEIVNEILNDSSRSILAERNEKSATQPEVIMSEDEKEAEKVLDGKADFVFSLNYEVLPAIEVKDFSKIAVTREVVDISDEEVDEQVKRIASSTRTFETKKGKAENEDRVTIDYLGKLDGEPFEGGADNDAQLVLGSGQFIPGFEEQLIGLKAGDEKVITVTFPAEYGAAHLAGKEATFDIKVKEVAKPNELVLDDETAKKLGIESLERLRQVVREQIESQYGQITRQKVKRQILDALDGDYQFETPQKLVDAEFNNIWQQINFDLQQAGRTFEDEETTEEAAREEYRKLAERRVRLGLVLSEIGEKAGVEVTEEELQRAVYDQVRRYPGQEKEIYDFLRRTPDAVANLRAPIFEEKVVDHLLANINVTDKKVSKEELTAEDEDAASEAKPAKKAAAKKKAAPKKKAEEGKSEEA.

The PPIase FKBP-type domain occupies 169 to 254; it reads EDRVTIDYLG…VKEVAKPNEL (86 aa). The segment at 435–477 is disordered; it reads VSKEELTAEDEDAASEAKPAKKAAAKKKAAPKKKAEEGKSEEA. The span at 454-466 shows a compositional bias: basic residues; the sequence is AKKAAAKKKAAPK. The segment covering 467 to 477 has biased composition (basic and acidic residues); sequence KKAEEGKSEEA.

This sequence belongs to the FKBP-type PPIase family. Tig subfamily.

The protein localises to the cytoplasm. It carries out the reaction [protein]-peptidylproline (omega=180) = [protein]-peptidylproline (omega=0). Functionally, involved in protein export. Acts as a chaperone by maintaining the newly synthesized protein in an open conformation. Functions as a peptidyl-prolyl cis-trans isomerase. The chain is Trigger factor (tig) from Brucella melitensis biotype 1 (strain ATCC 23456 / CCUG 17765 / NCTC 10094 / 16M).